A 123-amino-acid polypeptide reads, in one-letter code: Large ribosomal subunit protein bL17 (123 aa).

Belongs to the bacterial ribosomal protein bL17 family. In terms of assembly, part of the 50S ribosomal subunit. Contacts protein L32.

In Borrelia garinii subsp. bavariensis (strain ATCC BAA-2496 / DSM 23469 / PBi) (Borreliella bavariensis), this protein is Large ribosomal subunit protein bL17.